Consider the following 314-residue polypeptide: Chlorinase cctP2 (314 aa).

The segment covering 1–14 (MEGKTSRYQDEAHD) has biased composition (basic and acidic residues). A disordered region spans residues 1–24 (MEGKTSRYQDEAHDSAGSFNEETE). Short sequence motifs (HXXHC) lie at residues 150–154 (HALHC) and 177–181 (HIEHC).

This sequence belongs to the ustYa family.

It participates in mycotoxin biosynthesis. In terms of biological role, chlorinase; part of the gene cluster that mediates the biosynthesis of the mycotoxin cyclochlorotine, a hepatotoxic and carcinogenic cyclic chlorinated pentapeptide. Within the pathway, cctP2 catalyzes the formation of isocyclochlorotine via dichlorination of the Pro from the isocyclotine skeleton. The NRPS cctN initially catalyzes the condensation of L-serine (Ser), Pro, L-2-aminobutyrate (2Abu), Ser, and beta-Phe in this order to produce isocyclotine. After the dichlorination of Pro2 catalyzed by cctP2 to produce isocyclochlorotine, the cctO-mediated transacylation of isocyclochlorotine can furnish cyclochlorotine. The subsequent hydroxylation of cyclochlorotine by cctR yields hydroxycyclochlorotine as the final product. CctP1 probably acts as a phenylalanine aminomutase and provides the uncommon building block beta-Phe. Furthermore, 2Abu can be synthesized from threonine by one of the threonine dehydratases and transaminases localized outside of the cluster. The functions of the remaining proteins encoded by the cluster, cctM and cctT, have not been identified yet. In Talaromyces islandicus (Penicillium islandicum), this protein is Chlorinase cctP2.